Here is an 832-residue protein sequence, read N- to C-terminus: Vacuolar protein sorting-associated protein 53 homolog (832 aa).

A coiled-coil region spans residues 97 to 138 (LEEAQKAIQQLFGKIKDIKDKAEKSEQMVKEITRDIKQLDHA). Residues Lys110 and Lys360 each carry the N6-acetyllysine modification. The disordered stretch occupies residues 373-412 (KKLESPPPSTNPFLEDEPTPEMEELATEKGDLDQPKKPKA). Ser377 carries the phosphoserine modification. A compositionally biased stretch (acidic residues) spans 386-397 (LEDEPTPEMEEL). The residue at position 391 (Thr391) is a Phosphothreonine. The span at 398-412 (ATEKGDLDQPKKPKA) shows a compositional bias: basic and acidic residues. Ser580 is modified (phosphoserine). A disordered region spans residues 794 to 822 (LPAPPSGAESSGSLSLTAPTPEQESSRIR). Over residues 799 to 809 (SGAESSGSLSL) the composition is skewed to low complexity.

Belongs to the VPS53 family. In terms of assembly, component of the Golgi-associated retrograde protein (GARP) complex, also called VFT (VPS fifty-three) complex, composed of VPS51, VPS52, VPS53 and VPS54. Component of the endosome-associated retrograde protein (EARP) complex, composed of VPS51, VPS52, VPS53 and VPS50/Syndetin. EIPR1 interacts with both EARP and GARP complexes and mediates the recruitment of the GARP complex to the trans-Golgi network. Interacts with VPS50 in an EIPR1-independent manner.

The protein localises to the golgi apparatus. It localises to the trans-Golgi network membrane. It is found in the endosome membrane. The protein resides in the recycling endosome. In terms of biological role, acts as a component of the GARP complex that is involved in retrograde transport from early and late endosomes to the trans-Golgi network (TGN). The GARP complex is required for the maintenance of the cycling of mannose 6-phosphate receptors between the TGN and endosomes, this cycling is necessary for proper lysosomal sorting of acid hydrolases such as CTSD. Acts as a component of the EARP complex that is involved in endocytic recycling. The EARP complex associates with Rab4-positive endosomes and promotes recycling of internalized transferrin receptor (TFRC) to the plasma membrane. The polypeptide is Vacuolar protein sorting-associated protein 53 homolog (VPS53) (Homo sapiens (Human)).